Reading from the N-terminus, the 93-residue chain is MIKINLQLFAHKKGVGSSRNGRDSAAKRLGVKRADGQFVLAGNILVRQRGTKIHPGVNVGIGKDDTLFALKDGKVKFARLGRDKKQVMIVTAE.

Residues 1-9 constitute a propeptide that is removed on maturation; it reads MIKINLQLF.

The protein belongs to the bacterial ribosomal protein bL27 family. Post-translationally, the N-terminus is cleaved by ribosomal processing cysteine protease Prp.

The protein is Large ribosomal subunit protein bL27 of Ruminiclostridium cellulolyticum (strain ATCC 35319 / DSM 5812 / JCM 6584 / H10) (Clostridium cellulolyticum).